Consider the following 49-residue polypeptide: Fungus-induced-related protein 16 (49 aa).

The sequence is that of Fungus-induced-related protein 16 (fipr-16) from Caenorhabditis elegans.